Here is a 1149-residue protein sequence, read N- to C-terminus: ATP-dependent helicase/deoxyribonuclease subunit B (1149 aa).

One can recognise a UvrD-like helicase ATP-binding domain in the interval 1–276 (MAIRYIFGRA…INLDIEERKV (276 aa)). ATP is bound at residue 8–15 (GRAGRGKS). The region spanning 273–586 (ERKVLPKEKE…LVGSIERSKS (314 aa)) is the UvrD-like helicase C-terminal domain. Positions 786, 1105, 1108, and 1114 each coordinate [4Fe-4S] cluster.

It belongs to the helicase family. AddB/RexB type 1 subfamily. As to quaternary structure, heterodimer of AddA and AddB. It depends on Mg(2+) as a cofactor. Requires [4Fe-4S] cluster as cofactor.

The heterodimer acts as both an ATP-dependent DNA helicase and an ATP-dependent, dual-direction single-stranded exonuclease. Recognizes the chi site generating a DNA molecule suitable for the initiation of homologous recombination. The AddB subunit has 5' -&gt; 3' nuclease activity but not helicase activity. The chain is ATP-dependent helicase/deoxyribonuclease subunit B from Alkaliphilus metalliredigens (strain QYMF).